Reading from the N-terminus, the 297-residue chain is Phosphatidylserine decarboxylase proenzyme (297 aa).

Catalysis depends on charge relay system; for autoendoproteolytic cleavage activity residues Asp-92, His-149, and Ser-254. Residue Ser-254 is the Schiff-base intermediate with substrate; via pyruvic acid; for decarboxylase activity of the active site. A Pyruvic acid (Ser); by autocatalysis modification is found at Ser-254.

The protein belongs to the phosphatidylserine decarboxylase family. PSD-B subfamily. Prokaryotic type I sub-subfamily. In terms of assembly, heterodimer of a large membrane-associated beta subunit and a small pyruvoyl-containing alpha subunit. Pyruvate serves as cofactor. Is synthesized initially as an inactive proenzyme. Formation of the active enzyme involves a self-maturation process in which the active site pyruvoyl group is generated from an internal serine residue via an autocatalytic post-translational modification. Two non-identical subunits are generated from the proenzyme in this reaction, and the pyruvate is formed at the N-terminus of the alpha chain, which is derived from the carboxyl end of the proenzyme. The autoendoproteolytic cleavage occurs by a canonical serine protease mechanism, in which the side chain hydroxyl group of the serine supplies its oxygen atom to form the C-terminus of the beta chain, while the remainder of the serine residue undergoes an oxidative deamination to produce ammonia and the pyruvoyl prosthetic group on the alpha chain. During this reaction, the Ser that is part of the protease active site of the proenzyme becomes the pyruvoyl prosthetic group, which constitutes an essential element of the active site of the mature decarboxylase.

Its subcellular location is the cell membrane. It catalyses the reaction a 1,2-diacyl-sn-glycero-3-phospho-L-serine + H(+) = a 1,2-diacyl-sn-glycero-3-phosphoethanolamine + CO2. The protein operates within phospholipid metabolism; phosphatidylethanolamine biosynthesis; phosphatidylethanolamine from CDP-diacylglycerol: step 2/2. Functionally, catalyzes the formation of phosphatidylethanolamine (PtdEtn) from phosphatidylserine (PtdSer). The polypeptide is Phosphatidylserine decarboxylase proenzyme (Bordetella bronchiseptica (strain ATCC BAA-588 / NCTC 13252 / RB50) (Alcaligenes bronchisepticus)).